An 88-amino-acid chain; its full sequence is Large ribosomal subunit protein bL27 (88 aa).

The disordered stretch occupies residues 1 to 25 (MAHKKAGGSSRNGRDSPGQRRGIKR).

This sequence belongs to the bacterial ribosomal protein bL27 family.

The chain is Large ribosomal subunit protein bL27 (rpmA) from Lawsonia intracellularis.